A 224-amino-acid chain; its full sequence is Viral late gene transcription factor 3 (224 aa).

The segment at 6 to 26 (CSGCRHNGIVSEQGYEYCIFC) is a zinc-finger region.

This sequence belongs to the orthopoxvirus VLTF-3/OPG127 family. In terms of assembly, interacts with the late transcription elongation factor VLTF-4/OPG110. Interacts with the late transcription factors VLTF-1/OPG093.

Acts with RNA polymerase to initiate transcription from late gene promoters. This Vaccinia virus (strain Ankara) (VACV) protein is Viral late gene transcription factor 3 (OPG127).